The following is a 352-amino-acid chain: Mitochondrial ubiquitin ligase activator of NFKB 1 (352 aa).

At 1–8 (MESGSRPS) the chain is on the cytoplasmic side. Residues 9–29 (LGQVILLGTSSMVTAVLYSIY) traverse the membrane as a helical segment. Over 30–238 (RQKAQVAQEL…LLHRQESSVR (209 aa)) the chain is Mitochondrial intermembrane. A Glycyl lysine isopeptide (Lys-Gly) (interchain with G-Cter in ubiquitin) cross-link involves residue K52. A helical membrane pass occupies residues 239-259 (LWKILVLVFGFATCATLFFIL). Residues 260–352 (RKQYLHRQER…ITRVIPLYNS (93 aa)) are Cytoplasmic-facing. K299 is covalently cross-linked (Glycyl lysine isopeptide (Lys-Gly) (interchain with G-Cter in ubiquitin)). The RING-type zinc-finger motif lies at 302-340 (CVVCLSNFKSCVFLECGHVCSCRQCYLALPEPKRCPICR).

As to quaternary structure, homooligomer. Interacts with MAP3K7/TAK1. Interacts with UBC9. Interacts with and sumoylates DNM1L. Interacts with MAVS. Interacts with TP53 (via N-terminus); the interaction leads to ubiquitination and proteasomal degradation of TP53. Ubiquitinated by PRKN during mitophagy, leading to its degradation and enhancement of mitophagy. Deubiquitinated by USP30. In terms of tissue distribution, expressed in cortical neurons (at protein level).

Its subcellular location is the mitochondrion outer membrane. It localises to the peroxisome. It carries out the reaction S-ubiquitinyl-[E2 ubiquitin-conjugating enzyme]-L-cysteine + [acceptor protein]-L-lysine = [E2 ubiquitin-conjugating enzyme]-L-cysteine + N(6)-ubiquitinyl-[acceptor protein]-L-lysine.. It participates in protein modification; protein ubiquitination. It functions in the pathway protein modification; protein sumoylation. Exhibits weak E3 ubiquitin-protein ligase activity. E3 ubiquitin ligases accept ubiquitin from an E2 ubiquitin-conjugating enzyme in the form of a thioester and then directly transfer the ubiquitin to targeted substrates. Can ubiquitinate AKT1 preferentially at 'Lys-284' involving 'Lys-48'-linked polyubiquitination and seems to be involved in regulation of Akt signaling by targeting phosphorylated Akt to proteasomal degradation. Mediates polyubiquitination of cytoplasmic TP53 at 'Lys-27' which targets TP53 for proteasomal degradation, thus reducing TP53 levels in the cytoplasm and mitochondrion. Proposed to preferentially act as a SUMO E3 ligase at physiological concentrations. Plays a role in the control of mitochondrial morphology by promoting mitochondrial fragmentation, and influences mitochondrial localization. Likely to promote mitochondrial fission through negatively regulating the mitochondrial fusion proteins MFN1 and MFN2, acting in a pathway that is parallel to the PRKN/PINK1 regulatory pathway. May also be involved in the sumoylation of the membrane fission protein DNM1L. Inhibits cell growth. When overexpressed, activates JNK through MAP3K7/TAK1 and induces caspase-dependent apoptosis. Involved in the modulation of innate immune defense against viruses by inhibiting RIGI-dependent antiviral response. Can mediate RIGI sumoylation and disrupt its polyubiquitination. This is Mitochondrial ubiquitin ligase activator of NFKB 1 (Mul1) from Mus musculus (Mouse).